The chain runs to 309 residues: Caspase-7 (309 aa).

The propeptide at 1-24 (MSGDQHADRSSGEKSNGDQDDTVD) is N-terminally processed. Basic and acidic residues predominate over residues 1–31 (MSGDQHADRSSGEKSNGDQDDTVDAKPDRSS). A disordered region spans residues 1 to 53 (MSGDQHADRSSGEKSNGDQDDTVDAKPDRSSRLSLFAKKKKNGEEEQPKSSLS). The interval 39–42 (KKKN) is exosite. A loop L1 region spans residues 81–92 (KNFEDKTGMGTR). Catalysis depends on residues histidine 149 and cysteine 191. Residues 192–201 (RGSEFDEGIQ) are loop L2. Residues 204-214 (SGPANDTLETD) constitute a propeptide that is removed on maturation. Positions 234-246 (VPGYYSWRNPGRG) are loop L3. Residues 282-296 (ESQSDDPRFSEKKQI) form a loop L4 region.

Belongs to the peptidase C14A family. As to quaternary structure, heterotetramer that consists of two anti-parallel arranged heterodimers, each one formed by a 20 kDa (p20) and a 11 kDa (p11) subunit. Cleavage by different proteases, such as granzyme B (GZMB), caspase-1 (CASP1), caspase-8 (CASP8) or caspase-9 (CASP9) generate the two active subunits. Its involvement in different programmed cell death processes is probably specified by the protease that activates CASP7. Cleaved and activated by initiator caspases (CASP8 and/or CASP9), leading to execution phase of apoptosis. Cleavage and maturation by GZMB regulates granzyme-mediated programmed cell death. Cleaved and activated by CASP1 in response to bacterial infection.

Its subcellular location is the cytoplasm. The protein localises to the cytosol. The protein resides in the nucleus. It localises to the secreted. It is found in the extracellular space. It carries out the reaction Strict requirement for an Asp residue at position P1 and has a preferred cleavage sequence of Asp-Glu-Val-Asp-|-.. During activation, the N-terminal disordered prodomain is removed by cleavage. Concomitantly, double cleavage gives rise to a large Caspase-7 subunit p20 and a small Caspase-7 subunit p11. The two large and two small subunits then assemble to form the active CASP7 complex. Can be cleaved and activated by different caspases, depending on the context. Cleaved and activated by initiator caspases (CASP8 and/or CASP9), leading to execution phase of apoptosis. Cleavage and maturation by GZMB regulates granzyme-mediated programmed cell death. Cleavage and maturation by CASP1 regulates pyroptosis. Inhibited by BIRC6; following inhibition of BIRC6-caspase binding by DIABLO/SMAC, BIRC6 is subjected to caspase cleavage, leading to an increase in active caspases. In terms of biological role, thiol protease involved in different programmed cell death processes, such as apoptosis, pyroptosis or granzyme-mediated programmed cell death, by proteolytically cleaving target proteins. Has a marked preference for Asp-Glu-Val-Asp (DEVD) consensus sequences, with some plasticity for alternate non-canonical sequences. Its involvement in the different programmed cell death processes is probably determined by upstream proteases that activate CASP7. Acts as an effector caspase involved in the execution phase of apoptosis: following cleavage and activation by initiator caspases (CASP8 and/or CASP9), mediates execution of apoptosis by catalyzing cleavage of proteins. Compared to CASP3, acts as a minor executioner caspase and cleaves a limited set of target proteins. Acts as a key regulator of the inflammatory response in response to bacterial infection by catalyzing cleavage and activation of the sphingomyelin phosphodiesterase SMPD1 in the extracellular milieu, thereby promoting membrane repair. Cleaves BIRC6 following inhibition of BIRC6-caspase binding by DIABLO/SMAC. This is Caspase-7 from Gallus gallus (Chicken).